A 356-amino-acid polypeptide reads, in one-letter code: Calcium/calmodulin-dependent protein kinase type 1 (356 aa).

Residues 2–7 (PLFKRR) carry the Nuclear localization signal motif. The region spanning 22-278 (YDFRDVLGTG…CQSALEHPWI (257 aa)) is the Protein kinase domain. ATP is bound by residues 28–36 (LGTGAFSKV) and Lys52. The Proton acceptor role is filled by Asp144. Thr179 is modified (phosphothreonine; by ckk-1). The tract at residues 278-318 (ISGNTAYTHDIHRTVAVHLKKSLAKRNWKKAFNAAAAIRQL) is autoinhibitory domain. Positions 298-319 (KSLAKRNWKKAFNAAAAIRQLQ) are calmodulin-binding.

This sequence belongs to the protein kinase superfamily. CAMK Ser/Thr protein kinase family. CaMK subfamily. Requires Mg(2+) as cofactor.

Its subcellular location is the nucleus. The protein resides in the cytoplasm. It catalyses the reaction L-seryl-[protein] + ATP = O-phospho-L-seryl-[protein] + ADP + H(+). The enzyme catalyses L-threonyl-[protein] + ATP = O-phospho-L-threonyl-[protein] + ADP + H(+). Activated by Ca(2+)/calmodulin. Binding of calmodulin results in a conformational change that generates functional binding sites for both substrate and ATP, and thus relieves autoinhibition and lowers the Km of substrate binding. Must be phosphorylated by ckk-1 to be maximally active but this does not appear to be required for activity in AFD neurons. Calcium/calmodulin-dependent protein kinase that operates in the calcium-triggered CaMKK-CaMK1 signaling cascade which results in transcriptional activation. Transcriptional activation occurs at least in part through phosphorylation of crh-1. Regulates gene expression, sensory morphology, and function of the AFD thermosensory neurons. Involved in long-term adaptation of AFD neurons to temperatures warmer than the initial acclimatized cultivation temperature. Acts in the FLP thermal nociceptors to moderate the responsiveness to noxious heat and controls neuropeptide release from FLP neurons in response to temperature elevations. Regulates the dauer decision, the decision of the larvae to enter into the alternative stress-resistant and long-lived dauer developmental stage, based on the feeding state, primarily in the AWC sensory neurons. Acts non cell-autonomously in the AWC neurons to regulate expression of the daf-28 insulin-like peptide and cell-autonomously in the ASI sensory neurons to regulate expression of the growth promoting daf-7 in a food-regulated manner. Plays a role in memory-based thermal response of an individual AFD neuron cell. Involved in chemotaxis response in AWC neurons to attractant 2-heptanone, a volatile organic compound emitted by the nematode pathogenic bacterium B.nematocida B16. Represses transcription of glutamate receptor glr-1 in the nucleus basally and in response to change in synaptic activity. The protein is Calcium/calmodulin-dependent protein kinase type 1 (cmk-1) of Caenorhabditis briggsae.